The primary structure comprises 355 residues: DNA-directed RNA polymerase subunit alpha (355 aa).

Positions 1 to 248 (MYYDDGIPVF…EQLQPFISSD (248 aa)) are alpha N-terminal domain (alpha-NTD). Positions 267 to 355 (YDPILLRKVD…ELARQHTDED (89 aa)) are alpha C-terminal domain (alpha-CTD).

The protein belongs to the RNA polymerase alpha chain family. Homodimer. The RNAP catalytic core consists of 2 alpha, 1 beta, 1 beta' and 1 omega subunit. When a sigma factor is associated with the core the holoenzyme is formed, which can initiate transcription.

It catalyses the reaction RNA(n) + a ribonucleoside 5'-triphosphate = RNA(n+1) + diphosphate. In terms of biological role, DNA-dependent RNA polymerase catalyzes the transcription of DNA into RNA using the four ribonucleoside triphosphates as substrates. This is DNA-directed RNA polymerase subunit alpha from Wolbachia sp. subsp. Brugia malayi (strain TRS).